The primary structure comprises 49 residues: Small, acid-soluble spore protein O (49 aa).

The interval Met1–Gln49 is disordered. Positions His8–Gly20 are enriched in polar residues.

Belongs to the SspO family.

The protein localises to the spore core. The chain is Small, acid-soluble spore protein O from Bacillus cereus (strain B4264).